Reading from the N-terminus, the 343-residue chain is Uroporphyrinogen decarboxylase (343 aa).

Substrate contacts are provided by residues 21 to 25, aspartate 71, tyrosine 148, serine 203, and histidine 316; that span reads RQAGR.

Belongs to the uroporphyrinogen decarboxylase family. Homodimer.

The protein resides in the cytoplasm. The enzyme catalyses uroporphyrinogen III + 4 H(+) = coproporphyrinogen III + 4 CO2. The protein operates within porphyrin-containing compound metabolism; protoporphyrin-IX biosynthesis; coproporphyrinogen-III from 5-aminolevulinate: step 4/4. Its function is as follows. Catalyzes the decarboxylation of four acetate groups of uroporphyrinogen-III to yield coproporphyrinogen-III. This is Uroporphyrinogen decarboxylase from Campylobacter fetus subsp. fetus (strain 82-40).